The primary structure comprises 267 residues: Formamidopyrimidine-DNA glycosylase (267 aa).

Residue P2 is the Schiff-base intermediate with DNA of the active site. Catalysis depends on E3, which acts as the Proton donor. The Proton donor; for beta-elimination activity role is filled by K58. 3 residues coordinate DNA: H91, R110, and R152. Residues 233–267 (DVYGRGHGTCTSCGGALEAVRLGNRSTVFCPRCQQ) form an FPG-type zinc finger. Catalysis depends on R257, which acts as the Proton donor; for delta-elimination activity.

The protein belongs to the FPG family. Monomer. Zn(2+) serves as cofactor.

It carries out the reaction Hydrolysis of DNA containing ring-opened 7-methylguanine residues, releasing 2,6-diamino-4-hydroxy-5-(N-methyl)formamidopyrimidine.. It catalyses the reaction 2'-deoxyribonucleotide-(2'-deoxyribose 5'-phosphate)-2'-deoxyribonucleotide-DNA = a 3'-end 2'-deoxyribonucleotide-(2,3-dehydro-2,3-deoxyribose 5'-phosphate)-DNA + a 5'-end 5'-phospho-2'-deoxyribonucleoside-DNA + H(+). Its function is as follows. Involved in base excision repair of DNA damaged by oxidation or by mutagenic agents. Acts as a DNA glycosylase that recognizes and removes damaged bases. Has a preference for oxidized purines, such as 7,8-dihydro-8-oxoguanine (8-oxoG). Has AP (apurinic/apyrimidinic) lyase activity and introduces nicks in the DNA strand. Cleaves the DNA backbone by beta-delta elimination to generate a single-strand break at the site of the removed base with both 3'- and 5'-phosphates. This chain is Formamidopyrimidine-DNA glycosylase, found in Pelobacter propionicus (strain DSM 2379 / NBRC 103807 / OttBd1).